Consider the following 94-residue polypeptide: Small ribosomal subunit protein uS19 (94 aa).

A disordered region spans residues 75–94 (SHTRTFKGHAGDKKAAGSKR). The segment covering 83–94 (HAGDKKAAGSKR) has biased composition (basic and acidic residues).

The protein belongs to the universal ribosomal protein uS19 family.

In terms of biological role, protein S19 forms a complex with S13 that binds strongly to the 16S ribosomal RNA. The chain is Small ribosomal subunit protein uS19 from Nitrosomonas europaea (strain ATCC 19718 / CIP 103999 / KCTC 2705 / NBRC 14298).